The sequence spans 876 residues: Alanine--tRNA ligase (876 aa).

Residues histidine 560, histidine 564, cysteine 662, and histidine 666 each contribute to the Zn(2+) site.

The protein belongs to the class-II aminoacyl-tRNA synthetase family. It depends on Zn(2+) as a cofactor.

Its subcellular location is the cytoplasm. The enzyme catalyses tRNA(Ala) + L-alanine + ATP = L-alanyl-tRNA(Ala) + AMP + diphosphate. Catalyzes the attachment of alanine to tRNA(Ala) in a two-step reaction: alanine is first activated by ATP to form Ala-AMP and then transferred to the acceptor end of tRNA(Ala). Also edits incorrectly charged Ser-tRNA(Ala) and Gly-tRNA(Ala) via its editing domain. This chain is Alanine--tRNA ligase, found in Synechococcus sp. (strain ATCC 27144 / PCC 6301 / SAUG 1402/1) (Anacystis nidulans).